An 83-amino-acid chain; its full sequence is NAD(P)H-quinone oxidoreductase subunit L (83 aa).

2 helical membrane passes run 15 to 35 and 53 to 73; these read LFVL…VPLA and LGVY…APFI.

Belongs to the complex I NdhL subunit family. As to quaternary structure, NDH-1 can be composed of about 15 different subunits; different subcomplexes with different compositions have been identified which probably have different functions.

The protein resides in the cellular thylakoid membrane. The catalysed reaction is a plastoquinone + NADH + (n+1) H(+)(in) = a plastoquinol + NAD(+) + n H(+)(out). It catalyses the reaction a plastoquinone + NADPH + (n+1) H(+)(in) = a plastoquinol + NADP(+) + n H(+)(out). In terms of biological role, NDH-1 shuttles electrons from an unknown electron donor, via FMN and iron-sulfur (Fe-S) centers, to quinones in the respiratory and/or the photosynthetic chain. The immediate electron acceptor for the enzyme in this species is believed to be plastoquinone. Couples the redox reaction to proton translocation, and thus conserves the redox energy in a proton gradient. Cyanobacterial NDH-1 also plays a role in inorganic carbon-concentration. The protein is NAD(P)H-quinone oxidoreductase subunit L of Synechococcus sp. (strain CC9902).